Reading from the N-terminus, the 255-residue chain is MALAKRIIPCLDVKDGRVVKGVNFIGLRDAGDPVEAAKRYNGEGADELTFLDITASSDNRDTILHIIEEVAGQVFIPLTVGGGVRTVADIRRLLNAGADKVSINTAAVTRPDLINEAAGFFGSQAIVAAVDAKAVNPENTRWEIFTHGGRNPTGLDAVEWAVEMQKRGAGEILLTGMDRDGTKQGFNLPLTRAVAEAVDIPVIASGGVGNVRHLIEGITEGKADAVLAAGIFHFGEIAIREAKRTMREAGIEVRL.

Residues Asp-12 and Asp-131 contribute to the active site.

The protein belongs to the HisA/HisF family. In terms of assembly, heterodimer of HisH and HisF.

Its subcellular location is the cytoplasm. It carries out the reaction 5-[(5-phospho-1-deoxy-D-ribulos-1-ylimino)methylamino]-1-(5-phospho-beta-D-ribosyl)imidazole-4-carboxamide + L-glutamine = D-erythro-1-(imidazol-4-yl)glycerol 3-phosphate + 5-amino-1-(5-phospho-beta-D-ribosyl)imidazole-4-carboxamide + L-glutamate + H(+). Its pathway is amino-acid biosynthesis; L-histidine biosynthesis; L-histidine from 5-phospho-alpha-D-ribose 1-diphosphate: step 5/9. In terms of biological role, IGPS catalyzes the conversion of PRFAR and glutamine to IGP, AICAR and glutamate. The HisF subunit catalyzes the cyclization activity that produces IGP and AICAR from PRFAR using the ammonia provided by the HisH subunit. This Neisseria gonorrhoeae (strain ATCC 700825 / FA 1090) protein is Imidazole glycerol phosphate synthase subunit HisF.